Reading from the N-terminus, the 520-residue chain is GMP synthase [glutamine-hydrolyzing] (520 aa).

Residues 12-205 (KIIVLDYGSQ…AISICGARGD (194 aa)) enclose the Glutamine amidotransferase type-1 domain. Residue Cys89 is the Nucleophile of the active site. Catalysis depends on residues His179 and Glu181. One can recognise a GMPS ATP-PPase domain in the interval 206–395 (WSMDNFIDME…LGMPEEIVWR (190 aa)). 233–239 (SGGVDSS) serves as a coordination point for ATP.

As to quaternary structure, homodimer.

The catalysed reaction is XMP + L-glutamine + ATP + H2O = GMP + L-glutamate + AMP + diphosphate + 2 H(+). The protein operates within purine metabolism; GMP biosynthesis; GMP from XMP (L-Gln route): step 1/1. In terms of biological role, catalyzes the synthesis of GMP from XMP. This chain is GMP synthase [glutamine-hydrolyzing], found in Streptococcus pyogenes serotype M3 (strain SSI-1).